We begin with the raw amino-acid sequence, 686 residues long: Elongation factor G 2 (686 aa).

The 274-residue stretch at threonine 7 to leucine 280 folds into the tr-type G domain. GTP contacts are provided by residues alanine 16–threonine 23, aspartate 80–histidine 84, and asparagine 134–aspartate 137.

The protein belongs to the TRAFAC class translation factor GTPase superfamily. Classic translation factor GTPase family. EF-G/EF-2 subfamily.

It localises to the cytoplasm. Its function is as follows. Catalyzes the GTP-dependent ribosomal translocation step during translation elongation. During this step, the ribosome changes from the pre-translocational (PRE) to the post-translocational (POST) state as the newly formed A-site-bound peptidyl-tRNA and P-site-bound deacylated tRNA move to the P and E sites, respectively. Catalyzes the coordinated movement of the two tRNA molecules, the mRNA and conformational changes in the ribosome. The protein is Elongation factor G 2 (fusB) of Streptomyces coelicolor (strain ATCC BAA-471 / A3(2) / M145).